The chain runs to 184 residues: Small ribosomal subunit protein uS4c (184 aa).

Residues 82–143 (MRLDNILFRL…KQRSKALIQN (62 aa)) form the S4 RNA-binding domain.

Belongs to the universal ribosomal protein uS4 family. In terms of assembly, part of the 30S ribosomal subunit. Contacts protein S5. The interaction surface between S4 and S5 is involved in control of translational fidelity.

It is found in the plastid. Its subcellular location is the chloroplast. Its function is as follows. One of the primary rRNA binding proteins, it binds directly to 16S rRNA where it nucleates assembly of the body of the 30S subunit. In terms of biological role, with S5 and S12 plays an important role in translational accuracy. This is Small ribosomal subunit protein uS4c (rps4) from Patersonia fragilis (Short purple-flag).